We begin with the raw amino-acid sequence, 788 residues long: Spastin (788 aa).

The interval 1 to 105 is disordered; it reads MVRTKNQSSS…PRSAGGPSSV (105 aa). Residues 1–116 lie on the Cytoplasmic side of the membrane; the sequence is MVRTKNQSSS…KQNLYVVSFP (116 aa). The required for localization to punctate cytoplasmic foci stretch occupies residues 1–227; the sequence is MVRTKNQSSS…NRSGSGYSPG (227 aa). Low complexity-rich tracts occupy residues 8-48 and 57-75; these read SSSS…SSHR and ATNVSSSSNRRTTPGSSPD. Residues 117-137 constitute an intramembrane region (helical); it reads IIFLFNVLRSLIYQLFCIFRY. The Cytoplasmic segment spans residues 138 to 788; the sequence is LYGASTKVIY…WSSDYGDITI (651 aa). Residues 227 to 788 are sufficient for interaction with microtubules and microtubule severing; that stretch reads GPGDPLLAKQ…WSSDYGDITI (562 aa). Residues 240 to 315 form the MIT domain; it reads HRRAFEYISK…SMARDRLHFL (76 aa). Over residues 330–353 the composition is skewed to basic and acidic residues; that stretch reads KEEQKPNPSREQHQKPQKAREAAD. Residues 330-484 form a disordered region; the sequence is KEEQKPNPSR…SGSGSGASTP (155 aa). Positions 380-400 are enriched in low complexity; the sequence is LTTPRISATATTPTSSSSLAS. 2 stretches are compositionally biased toward polar residues: residues 419–433 and 453–469; these read NKSQTLPRNLGSKTS and QFSSGRNTPPQRSRTPI. Residues 471–485 are required for interaction with microtubules; sequence NNGASGSGSGASTPV. 553–560 is an ATP binding site; that stretch reads GPPGNGKT.

The protein belongs to the AAA ATPase family. Spastin subfamily. Homohexamer. The homohexamer is stabilized by ATP-binding. The homohexamer may adopt a ring conformation through which microtubules pass prior to being severed. Interacts with microtubules. Interacts with atl; may be involved in microtubule dynamics.

It localises to the membrane. The protein localises to the cytoplasm. The protein resides in the cytoskeleton. It is found in the microtubule organizing center. Its subcellular location is the centrosome. It localises to the chromosome. The protein localises to the lipid droplet. The enzyme catalyses n ATP + n H2O + a microtubule = n ADP + n phosphate + (n+1) alpha/beta tubulin heterodimers.. Functionally, ATP-dependent microtubule severing protein. Stimulates microtubule minus-end depolymerization and poleward microtubule flux in the mitotic spindle. Regulates microtubule stability in the neuromuscular junction synapse. Involved in lipid metabolism by regulating the size and distribution of lipid droplets. Involved in axon regeneration by regulating microtubule severing. This Drosophila pseudoobscura pseudoobscura (Fruit fly) protein is Spastin.